A 160-amino-acid polypeptide reads, in one-letter code: Ribonuclease P protein component 2 (160 aa).

It belongs to the eukaryotic/archaeal RNase P protein component 2 family. Consists of a catalytic RNA component and at least 4-5 protein subunits.

The protein localises to the cytoplasm. The enzyme catalyses Endonucleolytic cleavage of RNA, removing 5'-extranucleotides from tRNA precursor.. Part of ribonuclease P, a protein complex that generates mature tRNA molecules by cleaving their 5'-ends. In Methanosphaerula palustris (strain ATCC BAA-1556 / DSM 19958 / E1-9c), this protein is Ribonuclease P protein component 2.